The chain runs to 120 residues: Large ribosomal subunit protein bL17 (120 aa).

This sequence belongs to the bacterial ribosomal protein bL17 family. In terms of assembly, part of the 50S ribosomal subunit. Contacts protein L32.

This Mycoplasmopsis synoviae (strain 53) (Mycoplasma synoviae) protein is Large ribosomal subunit protein bL17.